Here is a 693-residue protein sequence, read N- to C-terminus: Phosphoribosylformylglycinamidine synthase subunit PurL (693 aa).

Residue H34 is part of the active site. Residues Y37 and K76 each contribute to the ATP site. E78 serves as a coordination point for Mg(2+). Substrate contacts are provided by residues 79–82 (SHNH) and R101. H80 serves as the catalytic Proton acceptor. D102 contacts Mg(2+). Q222 provides a ligand contact to substrate. D248 lines the Mg(2+) pocket. Position 292–294 (292–294 (ETQ)) interacts with substrate. The ATP site is built by D470 and G507. Substrate is bound at residue S510.

The protein belongs to the FGAMS family. In terms of assembly, monomer. Part of the FGAM synthase complex composed of 1 PurL, 1 PurQ and 2 PurS subunits.

The protein localises to the cytoplasm. It catalyses the reaction N(2)-formyl-N(1)-(5-phospho-beta-D-ribosyl)glycinamide + L-glutamine + ATP + H2O = 2-formamido-N(1)-(5-O-phospho-beta-D-ribosyl)acetamidine + L-glutamate + ADP + phosphate + H(+). Its pathway is purine metabolism; IMP biosynthesis via de novo pathway; 5-amino-1-(5-phospho-D-ribosyl)imidazole from N(2)-formyl-N(1)-(5-phospho-D-ribosyl)glycinamide: step 1/2. Its function is as follows. Part of the phosphoribosylformylglycinamidine synthase complex involved in the purines biosynthetic pathway. Catalyzes the ATP-dependent conversion of formylglycinamide ribonucleotide (FGAR) and glutamine to yield formylglycinamidine ribonucleotide (FGAM) and glutamate. The FGAM synthase complex is composed of three subunits. PurQ produces an ammonia molecule by converting glutamine to glutamate. PurL transfers the ammonia molecule to FGAR to form FGAM in an ATP-dependent manner. PurS interacts with PurQ and PurL and is thought to assist in the transfer of the ammonia molecule from PurQ to PurL. This is Phosphoribosylformylglycinamidine synthase subunit PurL from Pyrobaculum calidifontis (strain DSM 21063 / JCM 11548 / VA1).